The following is a 472-amino-acid chain: Trigger factor (472 aa).

The 86-residue stretch at 172 to 257 (GDEVRFDFKG…IKEITSVKPQ (86 aa)) folds into the PPIase FKBP-type domain. 2 stretches are compositionally biased toward polar residues: residues 439–449 (NQPKDTASTLS) and 461–472 (KTSNTKKVASKK). Positions 439-472 (NQPKDTASTLSKQEDKPKVAKAKTSNTKKVASKK) are disordered.

This sequence belongs to the FKBP-type PPIase family. Tig subfamily.

The protein resides in the cytoplasm. It carries out the reaction [protein]-peptidylproline (omega=180) = [protein]-peptidylproline (omega=0). Functionally, involved in protein export. Acts as a chaperone by maintaining the newly synthesized protein in an open conformation. Functions as a peptidyl-prolyl cis-trans isomerase. The protein is Trigger factor of Ureaplasma urealyticum serovar 10 (strain ATCC 33699 / Western).